The primary structure comprises 351 residues: Probable RNA methyltransferase BAV1540 (351 aa).

The Proton acceptor role is filled by glutamate 90. The Radical SAM core domain maps to 93–319 (LLPRDGLCVS…VKVRNSAGQD (227 aa)). Cysteine 100 and cysteine 324 are joined by a disulfide. Residues cysteine 107, cysteine 111, and cysteine 114 each contribute to the [4Fe-4S] cluster site. S-adenosyl-L-methionine is bound by residues 152 to 153 (GE), serine 182, 205 to 207 (SLH), and asparagine 281. Cysteine 324 (S-methylcysteine intermediate) is an active-site residue.

Belongs to the radical SAM superfamily. RlmN family. Requires [4Fe-4S] cluster as cofactor.

The protein resides in the cytoplasm. The protein is Probable RNA methyltransferase BAV1540 of Bordetella avium (strain 197N).